A 193-amino-acid polypeptide reads, in one-letter code: Cysteine and glycine-rich protein 1 (193 aa).

The 52-residue stretch at 10–61 (CGVCQKTVYFAEEVQCEGNSFHKSCFLCMVCKKNLDSTTVAVHGEEIYCKSC) folds into the LIM zinc-binding 1 domain. The Nuclear localization signal signature appears at 64–69 (KKYGPK). S81 carries the post-translational modification Phosphoserine. Residue K84 is modified to N6-acetyllysine. K91 participates in a covalent cross-link: Glycyl lysine isopeptide (Lys-Gly) (interchain with G-Cter in SUMO2). N6-acetyllysine is present on residues K112, K131, K137, and K161. The region spanning 119 to 170 (CPRCSQAVYAAEKVIGAGKSWHKSCFRCAKCGKGLESTTLADKDGEIYCKGC) is the LIM zinc-binding 2 domain. S192 carries the post-translational modification Phosphoserine.

In terms of assembly, interacts with ASCC1; ASCC2 and TRIP4.

The protein resides in the nucleus. In terms of biological role, could play a role in neuronal development. This is Cysteine and glycine-rich protein 1 (Csrp1) from Mus musculus (Mouse).